The following is a 406-amino-acid chain: Protease ElaD (406 aa).

Residue His-234 is part of the active site. The active-site Nucleophile is Cys-316.

Belongs to the peptidase C79 family.

Protease that can act as an efficient and specific deubiquitinating enzyme in vitro. Does not possess desumoylating and deneddylating activities. The physiological substrate is unknown. The polypeptide is Protease ElaD (elaD) (Escherichia coli O139:H28 (strain E24377A / ETEC)).